Consider the following 449-residue polypeptide: Glucose-6-phosphate isomerase (449 aa).

Glu291 (proton donor) is an active-site residue. Residues His312 and Lys426 contribute to the active site.

It belongs to the GPI family.

It is found in the cytoplasm. It carries out the reaction alpha-D-glucose 6-phosphate = beta-D-fructose 6-phosphate. Its pathway is carbohydrate biosynthesis; gluconeogenesis. It functions in the pathway carbohydrate degradation; glycolysis; D-glyceraldehyde 3-phosphate and glycerone phosphate from D-glucose: step 2/4. Catalyzes the reversible isomerization of glucose-6-phosphate to fructose-6-phosphate. This Streptococcus pyogenes serotype M6 (strain ATCC BAA-946 / MGAS10394) protein is Glucose-6-phosphate isomerase.